The sequence spans 300 residues: Ribosome-inactivating protein 3 (300 aa).

The active site involves Glu-207.

It belongs to the ribosome-inactivating protein family. Type 1 RIP subfamily. Monomer. As to expression, accumulates to high levels in seeds.

Its subcellular location is the cytoplasm. The catalysed reaction is Endohydrolysis of the N-glycosidic bond at one specific adenosine on the 28S rRNA.. In terms of biological role, possesses features of some constitutive defense agent. The coordinate Opaque-2-controlled synthesis of this protein and the major seed storage proteins (zeins) may provide the germinating seedling with both nutritional benefits and protection against pathogen invasion of the surrounding endosperm. This Zea mays (Maize) protein is Ribosome-inactivating protein 3 (CRIP3).